We begin with the raw amino-acid sequence, 271 residues long: Protein FAM110D (271 aa).

The span at 1–13 shows a compositional bias: polar residues; it reads MLLSSPTTPSRGR. Disordered regions lie at residues 1–84, 118–149, and 186–242; these read MLLS…PDSL, DAAP…TGKR, and PQSW…GRPT.

This sequence belongs to the FAM110 family.

This Mus musculus (Mouse) protein is Protein FAM110D.